We begin with the raw amino-acid sequence, 103 residues long: Large ribosomal subunit protein bL21 (103 aa).

The protein belongs to the bacterial ribosomal protein bL21 family. As to quaternary structure, part of the 50S ribosomal subunit. Contacts protein L20.

In terms of biological role, this protein binds to 23S rRNA in the presence of protein L20. In Marinobacter nauticus (strain ATCC 700491 / DSM 11845 / VT8) (Marinobacter aquaeolei), this protein is Large ribosomal subunit protein bL21.